Reading from the N-terminus, the 89-residue chain is Small ribosomal subunit protein uS15 (89 aa).

The protein belongs to the universal ribosomal protein uS15 family. In terms of assembly, part of the 30S ribosomal subunit. Forms a bridge to the 50S subunit in the 70S ribosome, contacting the 23S rRNA.

One of the primary rRNA binding proteins, it binds directly to 16S rRNA where it helps nucleate assembly of the platform of the 30S subunit by binding and bridging several RNA helices of the 16S rRNA. Its function is as follows. Forms an intersubunit bridge (bridge B4) with the 23S rRNA of the 50S subunit in the ribosome. In Cellvibrio japonicus (strain Ueda107) (Pseudomonas fluorescens subsp. cellulosa), this protein is Small ribosomal subunit protein uS15.